Reading from the N-terminus, the 870-residue chain is DNA mismatch repair protein MutS (870 aa).

ATP is bound at residue 620 to 627 (GPNMAGKS).

Belongs to the DNA mismatch repair MutS family.

This protein is involved in the repair of mismatches in DNA. It is possible that it carries out the mismatch recognition step. This protein has a weak ATPase activity. The chain is DNA mismatch repair protein MutS from Syntrophotalea carbinolica (strain DSM 2380 / NBRC 103641 / GraBd1) (Pelobacter carbinolicus).